The sequence spans 497 residues: Transmembrane protein 200A (497 aa).

The Cytoplasmic segment spans residues 1–61 (MIATGGVITG…RGKIRLYSAS (61 aa)). Positions 20–30 (TRSQYHLSAQS) are enriched in polar residues. The tract at residues 20–44 (TRSQYHLSAQSPGPAPEKKTTKRKP) is disordered. A helical membrane pass occupies residues 62 to 82 (GFFLVLGVLILMAGIAMAVLG). Residues 83-127 (YWPHKDQPKAPETKMSANNTQSFGREQAGSIAQFLEQHMHSEKMK) are Extracellular-facing. Asparagine 100 is a glycosylation site (N-linked (GlcNAc...) asparagine). Residues 128 to 148 (MLGPFTMGIGIFIFICANAIL) traverse the membrane as a helical segment. Topologically, residues 149 to 497 (HENRDRETKV…LKRGTSETRF (349 aa)) are cytoplasmic. Positions 353–375 (SNSATESASSTSSRSSLSPGSTS) are enriched in low complexity. 2 disordered regions span residues 353-385 (SNSATESASSTSSRSSLSPGSTSGRFLSPGAAR) and 400-438 (HSKSLDLERGPTKLTVQPEQRKHPSWPRLDRSNSKGYTR). A compositionally biased stretch (basic and acidic residues) spans 427 to 438 (RLDRSNSKGYTR).

Belongs to the TMEM200 family.

The protein resides in the membrane. This chain is Transmembrane protein 200A (tmem200a), found in Danio rerio (Zebrafish).